Here is a 292-residue protein sequence, read N- to C-terminus: MYKGIVTPMITPMGQNGEIDYRATEILIDNLADFGVDGLFPMGSTGLFPMFSTDEKKKFLGFVRDHSKKIEVYAGVGSSSTQESVELSKYTEDIGIKVRVLMPTYYIKPDEDWMYRHFSTVISAASNDLFIYNIPQLSGSWISESLIEKLTREFSNVKGIKDSSGDMRFFSRIIRHKNEKFDIFQGQDDLLFLSLSIGASGGVCGLSNISPYITNLYHEFSAGNLEKARKIQIDEVNPLMYAINEATFPAGYYYAFYKMNGIKGGYRAPMVEPTTDQKKKIDQELTKIPKKQ.

Catalysis depends on charge relay system residues serine 44 and tyrosine 106. The active-site Proton donor is the tyrosine 132. Lysine 161 serves as the catalytic Schiff-base intermediate with substrate.

This sequence belongs to the DapA family. In terms of assembly, homotetramer.

Its subcellular location is the cytoplasm. This is an uncharacterized protein from Thermoplasma acidophilum (strain ATCC 25905 / DSM 1728 / JCM 9062 / NBRC 15155 / AMRC-C165).